The following is a 109-amino-acid chain: Nucleoid-associated protein Ssed_2851 (109 aa).

It belongs to the YbaB/EbfC family. In terms of assembly, homodimer.

Its subcellular location is the cytoplasm. It is found in the nucleoid. Binds to DNA and alters its conformation. May be involved in regulation of gene expression, nucleoid organization and DNA protection. This is Nucleoid-associated protein Ssed_2851 from Shewanella sediminis (strain HAW-EB3).